We begin with the raw amino-acid sequence, 332 residues long: Formamidase (332 aa).

Residues 14 to 259 form the CN hydrolase domain; that stretch reads FLTALIQYPV…WEIVTAEVYP (246 aa). The active-site Proton acceptor is E60. Residue K132 is the Proton donor of the active site. The Nucleophile role is filled by C165.

It belongs to the carbon-nitrogen hydrolase superfamily. Aliphatic amidase family.

It catalyses the reaction formamide + H2O = formate + NH4(+). Is an aliphatic amidase with a restricted substrate specificity, as it only hydrolyzes formamide. The polypeptide is Formamidase (Bacillus thuringiensis (strain Al Hakam)).